The chain runs to 292 residues: WRKY transcription factor 55 (292 aa).

The segment at 133-155 (VERSGASGSSTPRQRRRKDEGEE) is disordered. Residues 167–235 (NTDLPPDDNH…YRGSHTCYNS (69 aa)) constitute a DNA-binding region (WRKY).

It belongs to the WRKY group III family.

The protein resides in the nucleus. Transcription factor. Interacts specifically with the W box (5'-(T)TGAC[CT]-3'), a frequently occurring elicitor-responsive cis-acting element. This is WRKY transcription factor 55 (WRKY55) from Arabidopsis thaliana (Mouse-ear cress).